A 673-amino-acid chain; its full sequence is DNA ligase (673 aa).

NAD(+)-binding positions include 34-38, 83-84, and glutamate 116; these read DAEYD and SL. Lysine 118 acts as the N6-AMP-lysine intermediate in catalysis. Residues arginine 139, glutamate 176, lysine 293, and lysine 317 each coordinate NAD(+). Cysteine 411, cysteine 414, cysteine 429, and cysteine 435 together coordinate Zn(2+). A BRCT domain is found at 595 to 673; that stretch reads NQQNPFFGKT…EDEFLKWVNS (79 aa).

It belongs to the NAD-dependent DNA ligase family. LigA subfamily. It depends on Mg(2+) as a cofactor. Mn(2+) is required as a cofactor.

It carries out the reaction NAD(+) + (deoxyribonucleotide)n-3'-hydroxyl + 5'-phospho-(deoxyribonucleotide)m = (deoxyribonucleotide)n+m + AMP + beta-nicotinamide D-nucleotide.. DNA ligase that catalyzes the formation of phosphodiester linkages between 5'-phosphoryl and 3'-hydroxyl groups in double-stranded DNA using NAD as a coenzyme and as the energy source for the reaction. It is essential for DNA replication and repair of damaged DNA. The chain is DNA ligase from Legionella pneumophila (strain Lens).